We begin with the raw amino-acid sequence, 167 residues long: Phospholipase A2 heteromtoxin (167 aa).

3 residues coordinate Ca(2+): W38, G40, and G42. Intrachain disulfides connect C39-C61, C60-C99, C67-C92, C90-C127, and C132-C144. The active site involves H64. D65 lines the Ca(2+) pocket. A propeptide spanning residues 136-140 is cleaved from the precursor; that stretch reads GRSAR.

Belongs to the phospholipase A2 family. Group III subfamily. In terms of assembly, heterodimer composed of a large and a small subunits; disulfide-linked. Ca(2+) serves as cofactor. In terms of tissue distribution, expressed by the venom gland.

The protein resides in the secreted. The enzyme catalyses a 1,2-diacyl-sn-glycero-3-phosphocholine + H2O = a 1-acyl-sn-glycero-3-phosphocholine + a fatty acid + H(+). Its function is as follows. Phospholipase toxin, which catalyzes the calcium-dependent hydrolysis of the 2-acyl groups in 3-sn-phosphoglycerides. Inhibits both skeletal (RYR1) and cardiac (RYR2) ryanodine receptors (calcium release channels). Probably blocks ryanodine receptors by generating a lipid product. The chain is Phospholipase A2 heteromtoxin from Heterometrus laoticus (Thai giant scorpion).